The chain runs to 317 residues: Bile salt hydrolase/transferase (317 aa).

Catalysis depends on cysteine 2, which acts as the Nucleophile; acyl-thioester intermediate. Deoxycholate contacts are provided by cysteine 2 and arginine 18. Asparagine 82 is a binding site for taurine.

Belongs to the peptidase C59 family. As to quaternary structure, homotetramer. The tetramer consists of a dimer of dimers.

The enzyme catalyses glycocholate + H2O = cholate + glycine. It carries out the reaction glycodeoxycholate + H2O = deoxycholate + glycine. It catalyses the reaction chenodeoxycholate + glycine = glycochenodeoxycholate + H2O. The catalysed reaction is cholate + taurine = taurocholate + H2O. The enzyme catalyses taurodeoxycholate + H2O = deoxycholate + taurine. It carries out the reaction taurochenodeoxycholate + H2O = chenodeoxycholate + taurine. It catalyses the reaction an L-alpha-amino acid + cholate = an N-choloyl-L-alpha-amino acid + H2O. The catalysed reaction is an L-alpha-amino acid + taurocholate = an N-choloyl-L-alpha-amino acid + taurine. The enzyme catalyses cholate + L-alanine = L-alanocholate + H2O. It carries out the reaction taurocholate + L-alanine = L-alanocholate + taurine. It catalyses the reaction cholate + L-serine = L-serocholate + H2O. The catalysed reaction is taurocholate + L-serine = L-serocholate + taurine. The enzyme catalyses cholate + L-histidine = L-histidocholate + H2O. It carries out the reaction taurocholate + L-histidine = L-histidocholate + taurine. Its pathway is lipid metabolism; bile acid biosynthesis. Its function is as follows. Possesses dual functions in bile acid metabolism. Acts as a bile salt hydrolase that catalyzes the deconjugation of glycine- and taurine-linked bile salts, which occurs naturally in the intestines of humans, releasing amino acid residues and deconjugated bile salts (bile acids). Can hydrolyze the amide bond in all six major human conjugated bile salts, namely glycocholate (GCA), glycodeoxycholate (GDCA), glycochenodeoxycholate (GCDCA), taurocholate (TCA), taurodeoxycholate (TDCA) and taurochenodeoxycholate (TCDCA). Shows a slight preference for glycine-conjugated bile acids as substrates. Also acts as an amine N-acyltransferase that conjugates a wide variety of amino acids to conjugated and non-conjugated bile acids, thus producing bacterial bile acid amidates (BBAAs) - also named microbially conjugated bile acids (MCBAs) - in the gastrointestinal tract. These BBAAs may facilitate communication between the microbiota and host through the activation of human ligand-activated transcription factors. The protein is Bile salt hydrolase/transferase of Bifidobacterium longum subsp. longum (strain ATCC 15707 / DSM 20219 / JCM 1217 / NCTC 11818 / E194b).